Here is a 756-residue protein sequence, read N- to C-terminus: Phosphoinositide 3-kinase regulatory subunit 6 (756 aa).

Disordered regions lie at residues 570-589 (SKSP…EGTG) and 716-738 (CSRT…EKNM). The span at 717–731 (SRTQKSKTSALNSHG) shows a compositional bias: polar residues.

In terms of assembly, heterodimer of a catalytic subunit (PIK3CG) and a regulatory (PIK3R6) subunit. The binding of PIK3R6 to PIK3CG may exclude the binding of PIK3R5 to PIK3CG. Interacts with beta-gamma G protein dimers. Interacts with PDE3B and RAPGEF3; form a signaling complex that regulates phosphatidylinositol 3-kinase gamma in angiogenesis. As to expression, highly expressed in heart. In a lower extent, also expressed in brain, spleen, lung, liver, kidney, prostate, thyroid, salivary gland, dendritic cells, macrophages and neutrophils.

It localises to the cytoplasm. It is found in the cell membrane. In terms of biological role, regulatory subunit of the PI3K gamma complex. Acts as an adapter to drive activation of PIK3CG by beta-gamma G protein dimers. The PIK3CG:PIK3R6 heterodimer is much less sensitive to beta-gamma G proteins than PIK3CG:PIK3R5 and its membrane recruitment and beta-gamma G protein dimer-dependent activation requires HRAS bound to PIK3CG. Recruits of the PI3K gamma complex to a PDE3B:RAPGEF3 signaling complex involved in angiogenesis; signaling seems to involve RRAS. This Mus musculus (Mouse) protein is Phosphoinositide 3-kinase regulatory subunit 6 (Pik3r6).